The chain runs to 165 residues: Crossover junction endodeoxyribonuclease RuvC (165 aa).

Residues D6, E67, and D142 contribute to the active site. D6, E67, and D142 together coordinate Mg(2+).

It belongs to the RuvC family. Homodimer which binds Holliday junction (HJ) DNA. The HJ becomes 2-fold symmetrical on binding to RuvC with unstacked arms; it has a different conformation from HJ DNA in complex with RuvA. In the full resolvosome a probable DNA-RuvA(4)-RuvB(12)-RuvC(2) complex forms which resolves the HJ. Mg(2+) serves as cofactor.

The protein resides in the cytoplasm. The enzyme catalyses Endonucleolytic cleavage at a junction such as a reciprocal single-stranded crossover between two homologous DNA duplexes (Holliday junction).. The RuvA-RuvB-RuvC complex processes Holliday junction (HJ) DNA during genetic recombination and DNA repair. Endonuclease that resolves HJ intermediates. Cleaves cruciform DNA by making single-stranded nicks across the HJ at symmetrical positions within the homologous arms, yielding a 5'-phosphate and a 3'-hydroxyl group; requires a central core of homology in the junction. The consensus cleavage sequence is 5'-(A/T)TT(C/G)-3'. Cleavage occurs on the 3'-side of the TT dinucleotide at the point of strand exchange. HJ branch migration catalyzed by RuvA-RuvB allows RuvC to scan DNA until it finds its consensus sequence, where it cleaves and resolves the cruciform DNA. This is Crossover junction endodeoxyribonuclease RuvC from Chlamydia abortus (strain DSM 27085 / S26/3) (Chlamydophila abortus).